A 104-amino-acid polypeptide reads, in one-letter code: Large ribosomal subunit protein bL21 (104 aa).

Belongs to the bacterial ribosomal protein bL21 family. Part of the 50S ribosomal subunit. Contacts protein L20.

Its function is as follows. This protein binds to 23S rRNA in the presence of protein L20. In Granulibacter bethesdensis (strain ATCC BAA-1260 / CGDNIH1), this protein is Large ribosomal subunit protein bL21.